A 455-amino-acid polypeptide reads, in one-letter code: Golgi pH regulator (455 aa).

The next 2 membrane-spanning stretches (helical) occupy residues 5 to 25 (IDSSIMVTSQVLFFGFGWLFF) and 46 to 66 (VTFAFSCTMFELIIFEILGVL). N67 carries N-linked (GlcNAc...) asparagine glycosylation. Transmembrane regions (helical) follow at residues 79 to 99 (LCVILLILVFMVPFYIGYFVV), 111 to 131 (LFACVLWLTFMYFFWKLGDPF), and 150 to 170 (VGVIGVTLMALLSGFGAVNCP). 2 N-linked (GlcNAc...) asparagine glycosylation sites follow: N180 and N243. 4 helical membrane-spanning segments follow: residues 290–310 (GYFFSIYCVWKIFMATINIVF), 343–363 (ISFILVGIIIVTSIRGLLITL), 378–398 (VIVLLLAQIMGMYFVSSVLLI), and 425–445 (WFDVIFLVSALSSILFLYLAH).

The protein belongs to the Golgi pH regulator (TC 1.A.38) family. Homotrimer.

It is found in the golgi apparatus membrane. The enzyme catalyses iodide(out) = iodide(in). The catalysed reaction is chloride(in) = chloride(out). It catalyses the reaction bromide(in) = bromide(out). It carries out the reaction fluoride(in) = fluoride(out). Voltage-gated channel that enables the transfer of anions such as iodide, chloride, bromide and fluoride which may function in counter-ion conductance and participates in Golgi acidification. The protein is Golgi pH regulator of Gallus gallus (Chicken).